The sequence spans 511 residues: V-type proton ATPase subunit B (511 aa).

Arg-381 contacts ATP. The interval 484–511 (FYGRDREQDDDEEEEEDPDKSGDKLIDA) is disordered. Residues 491–501 (QDDDEEEEEDP) are compositionally biased toward acidic residues. Over residues 502–511 (DKSGDKLIDA) the composition is skewed to basic and acidic residues.

Belongs to the ATPase alpha/beta chains family. In terms of assembly, V-ATPase is a heteromultimeric enzyme composed of a peripheral catalytic V1 complex (components A to H) attached to an integral membrane V0 proton pore complex (components: a, c, c', c'', d, e, f and VOA1).

The protein localises to the vacuole membrane. Non-catalytic subunit of the V1 complex of vacuolar(H+)-ATPase (V-ATPase), a multisubunit enzyme composed of a peripheral complex (V1) that hydrolyzes ATP and a membrane integral complex (V0) that translocates protons. V-ATPase is responsible for acidifying and maintaining the pH of intracellular compartments. The polypeptide is V-type proton ATPase subunit B (VMA2) (Candida tropicalis (Yeast)).